Reading from the N-terminus, the 190-residue chain is Peptidyl-tRNA hydrolase (190 aa).

Residue Y18 coordinates tRNA. The Proton acceptor role is filled by H23. TRNA contacts are provided by F69, N71, and N117.

The protein belongs to the PTH family. As to quaternary structure, monomer.

It localises to the cytoplasm. It catalyses the reaction an N-acyl-L-alpha-aminoacyl-tRNA + H2O = an N-acyl-L-amino acid + a tRNA + H(+). Functionally, hydrolyzes ribosome-free peptidyl-tRNAs (with 1 or more amino acids incorporated), which drop off the ribosome during protein synthesis, or as a result of ribosome stalling. Its function is as follows. Catalyzes the release of premature peptidyl moieties from peptidyl-tRNA molecules trapped in stalled 50S ribosomal subunits, and thus maintains levels of free tRNAs and 50S ribosomes. The protein is Peptidyl-tRNA hydrolase of Rhodococcus jostii (strain RHA1).